Consider the following 192-residue polypeptide: Small ribosomal subunit protein bS16 (192 aa).

Residues 149–161 show a composition bias toward basic and acidic residues; it reads EKKAAEAKAKAEA. The tract at residues 149-192 is disordered; the sequence is EKKAAEAKAKAEAEAAAAAEEATETEETPMEAAAEEAPAAESAE. Residues 178-192 show a composition bias toward low complexity; sequence MEAAAEEAPAAESAE.

Belongs to the bacterial ribosomal protein bS16 family.

This Porphyromonas gingivalis (strain ATCC 33277 / DSM 20709 / CIP 103683 / JCM 12257 / NCTC 11834 / 2561) protein is Small ribosomal subunit protein bS16.